The following is a 329-amino-acid chain: Malate dehydrogenase (329 aa).

12-18 (GAAGQIG) serves as a coordination point for NAD(+). Residues Arg93 and Arg99 each contribute to the substrate site. Residues Asn106, Gln113, and 130–132 (VGN) each bind NAD(+). Substrate is bound by residues Asn132 and Arg166. His191 acts as the Proton acceptor in catalysis.

It belongs to the LDH/MDH superfamily. MDH type 2 family.

It catalyses the reaction (S)-malate + NAD(+) = oxaloacetate + NADH + H(+). In terms of biological role, catalyzes the reversible oxidation of malate to oxaloacetate. This is Malate dehydrogenase from Aromatoleum aromaticum (strain DSM 19018 / LMG 30748 / EbN1) (Azoarcus sp. (strain EbN1)).